The chain runs to 270 residues: Putative hydro-lyase Noca_0093 (270 aa).

The protein belongs to the D-glutamate cyclase family.

The polypeptide is Putative hydro-lyase Noca_0093 (Nocardioides sp. (strain ATCC BAA-499 / JS614)).